Here is a 119-residue protein sequence, read N- to C-terminus: Anther-specific protein BCP1 (119 aa).

A signal peptide spans 1 to 23 (MGRQNVVVVFGLVFLAVLGLAAA). Residues 24-42 (ASSPSPSASPSKAPSTSTP) are compositionally biased toward low complexity. The tract at residues 24 to 95 (ASSPSPSASP…PSGSADSADS (72 aa)) is disordered. Over 24-98 (ASSPSPSASP…SADSADSGAA (75 aa)) the chain is Extracellular. Positions 56–69 (TDDDAAASPGDDDV) are enriched in acidic residues. Residues 82–95 (GSNGPSGSADSADS) are compositionally biased toward low complexity. The chain crosses the membrane as a helical span at residues 99–118 (ALGVSAVVVGVTSIVGSFLF). Position 119 (Phe119) is a topological domain, cytoplasmic.

Expressed in mature pollen grains, developing microspores and tapetal cells.

It is found in the membrane. Its function is as follows. Required for pollen fertility and development. Active in both diploid tapetum and haploid microspores. Major pollen protein. The sequence is that of Anther-specific protein BCP1 (BCP1) from Brassica campestris (Field mustard).